The sequence spans 198 residues: Phosphoheptose isomerase (198 aa).

Residues 36–198 (MIGSLLNNGK…DCLLLGVEDQ (163 aa)) form the SIS domain. 51 to 53 (NGG) provides a ligand contact to substrate. Residues histidine 60 and glutamate 64 each contribute to the Zn(2+) site. Substrate-binding positions include glutamate 64, 93–94 (ND), 119–121 (STS), serine 124, and glutamine 174. Residues glutamine 174 and histidine 182 each contribute to the Zn(2+) site.

Belongs to the SIS family. GmhA subfamily. In terms of assembly, homotetramer. Requires Zn(2+) as cofactor.

Its subcellular location is the cytoplasm. It carries out the reaction 2 D-sedoheptulose 7-phosphate = D-glycero-alpha-D-manno-heptose 7-phosphate + D-glycero-beta-D-manno-heptose 7-phosphate. Its pathway is carbohydrate biosynthesis; D-glycero-D-manno-heptose 7-phosphate biosynthesis; D-glycero-alpha-D-manno-heptose 7-phosphate and D-glycero-beta-D-manno-heptose 7-phosphate from sedoheptulose 7-phosphate: step 1/1. Functionally, catalyzes the isomerization of sedoheptulose 7-phosphate in D-glycero-D-manno-heptose 7-phosphate. The chain is Phosphoheptose isomerase from Aromatoleum aromaticum (strain DSM 19018 / LMG 30748 / EbN1) (Azoarcus sp. (strain EbN1)).